Here is a 615-residue protein sequence, read N- to C-terminus: Prickle planar cell polarity protein 3 (615 aa).

Basic residues predominate over residues 1 to 12; it reads MFARGSRRRRSG. Positions 1–26 are disordered; it reads MFARGSRRRRSGRAPPEAEDPDRGQP. Residues 74–182 enclose the PET domain; the sequence is SDFQRHSISD…IVRIFPVTIT (109 aa). LIM zinc-binding domains follow at residues 184-249, 250-309, and 310-373; these read AICE…CLRP, RCQA…RHAE, and YCDG…SEPT. Disordered regions lie at residues 396–567 and 587–615; these read ASFS…LGER and TFNS…CIVA. Polar residues predominate over residues 405 to 415; that stretch reads SETTTKGTSTE. A phosphoserine mark is found at Ser-475 and Ser-491. Basic residues predominate over residues 508-531; the sequence is PSRRRHHHHNHHHHHNRHPSRRRH. Over residues 537–555 the composition is skewed to low complexity; it reads GSGSDSESCSSSPSSSSSE. A compositionally biased stretch (basic and acidic residues) spans 606 to 615; that stretch reads QARDKNCIVA.

It belongs to the prickle / espinas / testin family. Interacts with VANGL2 via its C-terminus. The VANGL2-dependent membrane recruitment of PRICKLE3 is a prerequisite for its polarization. Interacts with WTIP. WTIP is involved in the recruitment of PRICKLE3 to the basal body. Interacts with MT-ATP8, a component of the mitochondrial complex V. In terms of tissue distribution, widely expressed.

It is found in the cytoplasm. Its subcellular location is the cell membrane. The protein resides in the mitochondrion. In terms of biological role, involved in the planar cell polarity (PCP) pathway that is essential for the polarization of epithelial cells during morphogenetic processes, including gastrulation and neurulation. PCP is maintained by two molecular modules, the global and the core modules, PRICKLE3 being part of the core module. Distinct complexes of the core module segregate to opposite sides of the cell, where they interact with the opposite complex in the neighboring cell at or near the adherents junctions. Involved in the organization of the basal body. Involved in cilia growth and positioning. Required for proper assembly, stability, and function of mitochondrial membrane ATP synthase (mitochondrial complex V). In Homo sapiens (Human), this protein is Prickle planar cell polarity protein 3.